Reading from the N-terminus, the 378-residue chain is Interleukin-3 receptor subunit alpha (378 aa).

Residues 1 to 18 (MVLLWLTLLLIALPCLLQ) form the signal peptide. The Extracellular segment spans residues 19–305 (TKEDPNPPIT…EEGANTRAWR (287 aa)). N-linked (GlcNAc...) asparagine glycosylation is found at N46, N64, N80, and N109. 4 disulfides stabilise this stretch: C52-C68, C76-C195, C112-C122, and C151-C165. N212 and N218 each carry an N-linked (GlcNAc...) asparagine glycan. C217 and C293 are oxidised to a cystine. The short motif at 282–286 (LSAWS) is the WSXWS motif element. The helical transmembrane segment at 306-325 (TSLLIALGTLLALVCVFVIC) threads the bilayer. Residues 326–378 (RRYLVMQRLFPRIPHMKDPIGDSFQNDKLVVWEAGKAGLEECLVTEVQVVQKT) are Cytoplasmic-facing. The short motif at 334-342 (LFPRIPHMK) is the Box 1 motif element.

Belongs to the type I cytokine receptor family. Type 5 subfamily. Interacts with IL3. Heterodimer of an alpha and a beta subunit. The beta subunit is common to the IL3, IL5 and GM-CSF receptors. In terms of processing, ubiquitinated by RNFT2 in response to IL3. Ubiquitination leads ligand-induced degradation by the proteasome. Ubiquitinated by RNF128 via 'Lys-27'-linked polyubiquitination, facilitating its degradation through the lysosomal pathway.

It is found in the cell membrane. In terms of biological role, cell surface receptor for IL3 expressed on hematopoietic progenitor cells, monocytes and B-lymphocytes that controls the production and differentiation of hematopoietic progenitor cells into lineage-restricted cells. Ligand stimulation rapidly induces hetrodimerization with IL3RB, phosphorylation and enzyme activity of effector proteins such as JAK2 and PI3K that play a role in signaling cell proliferation and differentiation. Activation of JAK2 leads to STAT5-mediated transcriptional program. The chain is Interleukin-3 receptor subunit alpha from Homo sapiens (Human).